Consider the following 387-residue polypeptide: Ferrochelatase (387 aa).

His196 and Glu277 together coordinate Fe cation.

This sequence belongs to the ferrochelatase family.

The protein resides in the cytoplasm. The enzyme catalyses heme b + 2 H(+) = protoporphyrin IX + Fe(2+). It participates in porphyrin-containing compound metabolism; protoheme biosynthesis; protoheme from protoporphyrin-IX: step 1/1. Functionally, catalyzes the ferrous insertion into protoporphyrin IX. The sequence is that of Ferrochelatase from Trichodesmium erythraeum (strain IMS101).